A 150-amino-acid polypeptide reads, in one-letter code: Ribonuclease pancreatic delta-type (150 aa).

The first 25 residues, 1 to 25 (MGLEKSFILFSLLVLVLGWVQPSLG), serve as a signal peptide directing secretion. R35 is a binding site for substrate. H37 (proton acceptor) is an active-site residue. 4 disulfides stabilise this stretch: C51/C110, C65/C121, C83/C136, and C90/C98. Substrate-binding positions include 66–70 (KRVNT), K91, and R111. Catalysis depends on H145, which acts as the Proton donor.

Belongs to the pancreatic ribonuclease family. Monomer.

It is found in the secreted. The enzyme catalyses an [RNA] containing cytidine + H2O = an [RNA]-3'-cytidine-3'-phosphate + a 5'-hydroxy-ribonucleotide-3'-[RNA].. It carries out the reaction an [RNA] containing uridine + H2O = an [RNA]-3'-uridine-3'-phosphate + a 5'-hydroxy-ribonucleotide-3'-[RNA].. Endonuclease that catalyzes the cleavage of RNA on the 3' side of pyrimidine nucleotides. Acts on single-stranded and double-stranded RNA. The protein is Ribonuclease pancreatic delta-type (Rnase1d) of Rattus norvegicus (Rat).